We begin with the raw amino-acid sequence, 170 residues long: Adenine phosphoribosyltransferase (170 aa).

It belongs to the purine/pyrimidine phosphoribosyltransferase family. Homodimer.

Its subcellular location is the cytoplasm. It catalyses the reaction AMP + diphosphate = 5-phospho-alpha-D-ribose 1-diphosphate + adenine. Its pathway is purine metabolism; AMP biosynthesis via salvage pathway; AMP from adenine: step 1/1. Its function is as follows. Catalyzes a salvage reaction resulting in the formation of AMP, that is energically less costly than de novo synthesis. The polypeptide is Adenine phosphoribosyltransferase (Brachyspira hyodysenteriae (strain ATCC 49526 / WA1)).